Here is a 238-residue protein sequence, read N- to C-terminus: Large ribosomal subunit protein uL3 (238 aa).

Disordered stretches follow at residues Ser-140 to Gly-164 and Leu-212 to Ala-238. N5-methylglutamine is present on Gln-151. The segment covering Ala-225–Ala-238 has biased composition (low complexity).

Belongs to the universal ribosomal protein uL3 family. As to quaternary structure, part of the 50S ribosomal subunit. Forms a cluster with proteins L14 and L19. In terms of processing, methylated by PrmB.

Functionally, one of the primary rRNA binding proteins, it binds directly near the 3'-end of the 23S rRNA, where it nucleates assembly of the 50S subunit. This is Large ribosomal subunit protein uL3 from Bradyrhizobium diazoefficiens (strain JCM 10833 / BCRC 13528 / IAM 13628 / NBRC 14792 / USDA 110).